The primary structure comprises 245 residues: 5'-nucleotidase SurE (245 aa).

A divalent metal cation is bound by residues D8, D9, S39, and N91.

It belongs to the SurE nucleotidase family. Requires a divalent metal cation as cofactor.

It is found in the cytoplasm. The enzyme catalyses a ribonucleoside 5'-phosphate + H2O = a ribonucleoside + phosphate. Functionally, nucleotidase that shows phosphatase activity on nucleoside 5'-monophosphates. This Herminiimonas arsenicoxydans protein is 5'-nucleotidase SurE.